The chain runs to 349 residues: Hydroxymethylglutaryl-CoA synthase (349 aa).

(3S)-3-hydroxy-3-methylglutaryl-CoA-binding residues include Asp30 and Ala31. Residue Glu82 is the Proton donor/acceptor of the active site. Residues Cys114 and Thr155 each contribute to the (3S)-3-hydroxy-3-methylglutaryl-CoA site. The Acyl-thioester intermediate role is filled by Cys114. Position 203 (Arg203) interacts with CoA. (3S)-3-hydroxy-3-methylglutaryl-CoA contacts are provided by Thr205 and His238. His238 serves as the catalytic Proton donor/acceptor. CoA is bound at residue Lys243. (3S)-3-hydroxy-3-methylglutaryl-CoA contacts are provided by Asn270 and Ser300.

This sequence belongs to the thiolase-like superfamily. Archaeal HMG-CoA synthase family. In terms of assembly, interacts with acetoacetyl-CoA thiolase that catalyzes the precedent step in the pathway and with a DUF35 protein. The acetoacetyl-CoA thiolase/HMG-CoA synthase complex channels the intermediate via a fused CoA-binding site, which allows for efficient coupling of the endergonic thiolase reaction with the exergonic HMGCS reaction.

It catalyses the reaction acetoacetyl-CoA + acetyl-CoA + H2O = (3S)-3-hydroxy-3-methylglutaryl-CoA + CoA + H(+). The protein operates within metabolic intermediate biosynthesis; (R)-mevalonate biosynthesis; (R)-mevalonate from acetyl-CoA: step 2/3. Its function is as follows. Catalyzes the condensation of acetyl-CoA with acetoacetyl-CoA to form 3-hydroxy-3-methylglutaryl-CoA (HMG-CoA). Functions in the mevalonate (MVA) pathway leading to isopentenyl diphosphate (IPP), a key precursor for the biosynthesis of isoprenoid compounds that are building blocks of archaeal membrane lipids. The protein is Hydroxymethylglutaryl-CoA synthase of Methanococcus maripaludis (strain C6 / ATCC BAA-1332).